The chain runs to 80 residues: Homeobox protein 7 (80 aa).

The homeobox DNA-binding region spans 8–67 (SNIRNIRSSGISTKKLEDFFSINQYPNKNEIKDFANYYQCDETKIKNWFKGKRDRLKKKS). The segment at 60–80 (RDRLKKKSSNNEKSGNKFYFK) is disordered. Positions 70-80 (NEKSGNKFYFK) are enriched in low complexity.

It is found in the nucleus. In terms of biological role, putative transcription factor. The sequence is that of Homeobox protein 7 (hbx7) from Dictyostelium discoideum (Social amoeba).